The chain runs to 652 residues: tRNA 5-methylaminomethyl-2-thiouridine biosynthesis bifunctional protein MnmC (652 aa).

A tRNA (mnm(5)s(2)U34)-methyltransferase region spans residues 1-235 (MPDRLVPATL…EPALRVGEYA (235 aa)). The tract at residues 259-652 (IGAGLAGCAV…IRALRGRQIG (394 aa)) is FAD-dependent cmnm(5)s(2)U34 oxidoreductase.

The protein in the N-terminal section; belongs to the methyltransferase superfamily. tRNA (mnm(5)s(2)U34)-methyltransferase family. In the C-terminal section; belongs to the DAO family. FAD serves as cofactor.

The protein localises to the cytoplasm. It carries out the reaction 5-aminomethyl-2-thiouridine(34) in tRNA + S-adenosyl-L-methionine = 5-methylaminomethyl-2-thiouridine(34) in tRNA + S-adenosyl-L-homocysteine + H(+). In terms of biological role, catalyzes the last two steps in the biosynthesis of 5-methylaminomethyl-2-thiouridine (mnm(5)s(2)U) at the wobble position (U34) in tRNA. Catalyzes the FAD-dependent demodification of cmnm(5)s(2)U34 to nm(5)s(2)U34, followed by the transfer of a methyl group from S-adenosyl-L-methionine to nm(5)s(2)U34, to form mnm(5)s(2)U34. This Burkholderia ambifaria (strain MC40-6) protein is tRNA 5-methylaminomethyl-2-thiouridine biosynthesis bifunctional protein MnmC.